The following is a 533-amino-acid chain: Cytochrome P450 monooxygenase calL (533 aa).

A helical transmembrane segment spans residues 8 to 28; that stretch reads TQLALLVWGIAVCVTLAIVVP. Asn33 is a glycosylation site (N-linked (GlcNAc...) asparagine). The tract at residues 123–148 is disordered; it reads GKFKQDQSGRSKNPVPGHDVKPGQPR. An N-linked (GlcNAc...) asparagine glycan is attached at Asn388. Residue Cys467 participates in heme binding.

This sequence belongs to the cytochrome P450 family. Heme serves as cofactor.

Its subcellular location is the membrane. The protein operates within secondary metabolite biosynthesis. In terms of biological role, cytochrome P450 monooxygenase; part of the gene cluster that mediates the biosynthesis of calbistrin A and related compounds. Calbistrin A is a secondary metabolite with an interesting structure that was recently found to have bioactivity against leukemia cells. It consists of two polyketides linked by an ester bond: a bicyclic decalin containing polyketide and a linear 12 carbon dioic acid structure. The polyketide synthase calA is probably responsible for forming the decalin moiety. Because calA lacks a designated enoylreductase (ER) domain, the required activity is provided by the trans-enoyl reductase calK. Following release from the PKS, calF then probably catalyzes the oxidation and the subsequent Diels Alder cycloisomerization that lead to the formation of the decalin moiety. The decalin polyketide backbone includes two C-methyl groups, at C7 and C11 in backbone, of which the C7 position is probably methylated by the methyltransferase domain of calA. A candidate for adding the methyl group at C11, if not done by CalA, is the cluster methyltransferase calH. Several additional tailoring enzymes within the cluster could be involved in the modification of the decalin polyketide product. Those include the 3 cytochrome P450 monooxygenases CalE, CalG and CalL, of which one might be responsible for the introduction of the extra hydroxyl group attached to the backbone of the decalin moiety, at position C9 in the backbone, that allows for attachment of the linear moiety. One tailoring enzyme activity that is expected to be involved in biosynthesis of calbistrin is an acyltransferase for connecting the two polyketide synthase products, and which could be performed by the cluster acyltransferase calJ. The enzyme responsible for the biosynthesis of the linear moiety, probably a second PKS, has not been identified yet. The sequence is that of Cytochrome P450 monooxygenase calL from Penicillium decumbens.